Consider the following 121-residue polypeptide: NAD(P)H-quinone oxidoreductase subunit M (121 aa).

It belongs to the complex I NdhM subunit family. In terms of assembly, NDH-1 can be composed of about 15 different subunits; different subcomplexes with different compositions have been identified which probably have different functions.

Its subcellular location is the cellular thylakoid membrane. The catalysed reaction is a plastoquinone + NADH + (n+1) H(+)(in) = a plastoquinol + NAD(+) + n H(+)(out). It catalyses the reaction a plastoquinone + NADPH + (n+1) H(+)(in) = a plastoquinol + NADP(+) + n H(+)(out). Its function is as follows. NDH-1 shuttles electrons from an unknown electron donor, via FMN and iron-sulfur (Fe-S) centers, to quinones in the respiratory and/or the photosynthetic chain. The immediate electron acceptor for the enzyme in this species is believed to be plastoquinone. Couples the redox reaction to proton translocation, and thus conserves the redox energy in a proton gradient. Cyanobacterial NDH-1 also plays a role in inorganic carbon-concentration. This is NAD(P)H-quinone oxidoreductase subunit M from Synechococcus sp. (strain JA-2-3B'a(2-13)) (Cyanobacteria bacterium Yellowstone B-Prime).